The following is a 957-amino-acid chain: MQLFKETKIILLSSMSSLGSGSPEEIERSWCACVLYCVSKLGNAGKAKEDRGITLRQILRAFDLKIVDFFKEMPQFCIKVGFILTGLYGSDWEKRLELQELQANLVHLCSLGRHYRRAYQELFLLNDGKPANNSSELNVQQASEYYDFGWLLFLVLRNQASSAVKNLLTSTTELVSVLAVLIIHIPVRLRNFSIEDSSCFAKKSDKGVNLIASLCERYLTSEDELSKALQKTNILIKDILKKKPCSDVSECQQGSLSFIDPEGLTFFKNFLEEDSLKSSLQVLEKEYVNGLDTKGELDARMFANEEDSLLGSGSLSGGALKLPGTKRKYDDVMASPTKSTASRAPMSPPRFCPSPNGNSFCNSKMAPFTPVSTAMTTAKWLRSTISPLPSKPSGELLRFFSACDKDVTDDITCRAAIILGAIFTGSSFGERMCTSLRNTSGMDAIWTEQRKMEALKLYYRVLESMCRAESQILSGSNLTSLLSNERFHRCMIACSAELVLATHKTVTMMFPAVLEKTGITAFDLSKVIESFVRHEDSLPRELKRHLNSLEERLLESMAWEKGSSMYNSLIVARPTLSAEINRLGLLAEPMPSLDAIAVHHDISLGGLPPLPFHKQPDKDEVRSPKRACTERRNVLVDNSFRSPVKDAIKSKFLPPLQSAFASPTRPNPAAGGETCAETGIGVFLSKITKLAAIRIKCLCERLQLSQQILERVYSLVQQIISQQTALFFNRHIDQIILCCIYGVAKISQLALTFKEIIFSYRKQSQCKPQVFRSVYVNWPSRSRSGKIGEDHVDIITFYNEVFIPTVKPLLVDLGPGTSPNRNNEPKSGGDAASFPESPRLSRFPNLPDMSPKKVSATHNVYVSPLRSSKMDTLLSPSSKSYYACVGESTHAFQSPSKDLNAINTRLNSGKKVNGRLNFDVVSDLVVARSLSDQNGSSAAAMAVFGTKTPVKGEQQDP.

The interval 369-569 (TPVSTAMTTA…EKGSSMYNSL (201 aa)) is domain A. The pocket stretch occupies residues 369-808 (TPVSTAMTTA…NEVFIPTVKP (440 aa)). Residues 570 to 677 (IVARPTLSAE…PAAGGETCAE (108 aa)) are spacer. Residues 678-808 (TGIGVFLSKI…NEVFIPTVKP (131 aa)) are domain B. Residues 814–854 (GPGTSPNRNNEPKSGGDAASFPESPRLSRFPNLPDMSPKKV) form a disordered region.

The protein belongs to the retinoblastoma protein (RB) family.

The protein resides in the nucleus. In terms of biological role, regulator of biological processes that recruits a histone deacetylase to control gene transcription. May play a role in the entry into mitosis, negatively regulating the cell proliferation. Formation of stable complexes with geminiviridae replication-associated proteins may create a cellular environment which favors viral DNA replication. This chain is Retinoblastoma-related protein 1 (RBR1), found in Triticum aestivum (Wheat).